The sequence spans 260 residues: Glutathione S-transferase domain-containing protein DDB_G0274223 (260 aa).

The GST N-terminal domain occupies 7 to 96; the sequence is KVDYIFYTNN…YLAQKYNTFL (90 aa). In terms of domain architecture, GST C-terminal spans 102 to 233; it reads NPHENSDVIT…GFKTFNPSAL (132 aa).

The protein belongs to the GST superfamily.

This chain is Glutathione S-transferase domain-containing protein DDB_G0274223, found in Dictyostelium discoideum (Social amoeba).